Reading from the N-terminus, the 265-residue chain is Undecaprenyl-diphosphatase (265 aa).

A run of 8 helical transmembrane segments spans residues 1–21 (MDIL…FLPI), 39–59 (QGLA…ILYF), 86–106 (WCII…GNFI), 112–132 (SVSV…FADA), 140–160 (LAQM…LAMI), 186–206 (FSFL…GLKL), 219–239 (VGVL…LSFI), and 244–264 (MLPF…LVWF).

The protein belongs to the UppP family.

Its subcellular location is the cell inner membrane. It catalyses the reaction di-trans,octa-cis-undecaprenyl diphosphate + H2O = di-trans,octa-cis-undecaprenyl phosphate + phosphate + H(+). Catalyzes the dephosphorylation of undecaprenyl diphosphate (UPP). Confers resistance to bacitracin. The chain is Undecaprenyl-diphosphatase from Saccharophagus degradans (strain 2-40 / ATCC 43961 / DSM 17024).